A 596-amino-acid chain; its full sequence is MENIRNFSIIAHIDHGKSTLADRLIQECGAIEDRKMSDQVMDTMDIEKERGITIKAQSVRLTYKKDGKEYILNLIDTPGHVDFSYEVSRSLASSEGALLVVDASQGVEAQTIANVYIALENDLELIPVINKIDLPAADPERVKADIENTIGLDCTDAIEVSAKTGQGINELLDAIIERIPAPSGDPTAPTKALIYDSWFDSYLGALALVRVFEGEIKKGQEVLVMGTGKTHEVIDLMYPHPINPQKTSTIKTGEIGIVVMGLKNIGDVQVGDTITDAKNPTPEPIEGFEEAKPFVFAGLYPIDTDKFEDLREALNKLKLNDAAIAFEPETSAALGFGFRVGFLGLLHMEVVKERLEREFGLDLIATAPTVTYKVKKTDGETIEIQNPSELPPPQEIDTIYEPYVKATIITPTEFLGNVLNLLSEKRGVQLKMDYITQDRVMLEYEIPMNEIVMDFYDKLKTVTKGYASFDYEPSGYKEGDLVKLDIRVAGEVVDALSIIVPKEKAQYKGRELVKKMKELVPRQLFEVAIQASIGNKIIARETVSAMRKNVTAKCYGGDITRKRKLLEKQKEGKKRMKAIGKVQLPQEAFLSVLKID.

A tr-type G domain is found at 2–183 (ENIRNFSIIA…AIIERIPAPS (182 aa)). GTP-binding positions include 14–19 (DHGKST) and 130–133 (NKID).

This sequence belongs to the TRAFAC class translation factor GTPase superfamily. Classic translation factor GTPase family. LepA subfamily.

The protein localises to the cell inner membrane. The catalysed reaction is GTP + H2O = GDP + phosphate + H(+). Functionally, required for accurate and efficient protein synthesis under certain stress conditions. May act as a fidelity factor of the translation reaction, by catalyzing a one-codon backward translocation of tRNAs on improperly translocated ribosomes. Back-translocation proceeds from a post-translocation (POST) complex to a pre-translocation (PRE) complex, thus giving elongation factor G a second chance to translocate the tRNAs correctly. Binds to ribosomes in a GTP-dependent manner. This Nitratiruptor sp. (strain SB155-2) protein is Elongation factor 4.